The following is a 155-amino-acid chain: Ribonuclease H (155 aa).

The RNase H type-1 domain maps to 1–142 (MLKQVEIFTD…CDELARAAAM (142 aa)). Residues Asp-10, Glu-48, Asp-70, and Asp-134 each coordinate Mg(2+).

This sequence belongs to the RNase H family. Monomer. Requires Mg(2+) as cofactor.

The protein localises to the cytoplasm. It carries out the reaction Endonucleolytic cleavage to 5'-phosphomonoester.. In terms of biological role, endonuclease that specifically degrades the RNA of RNA-DNA hybrids. This chain is Ribonuclease H, found in Citrobacter koseri (strain ATCC BAA-895 / CDC 4225-83 / SGSC4696).